Reading from the N-terminus, the 874-residue chain is Alanine--tRNA ligase (874 aa).

Zn(2+) is bound by residues His562, His566, Cys665, and His669.

This sequence belongs to the class-II aminoacyl-tRNA synthetase family. Zn(2+) is required as a cofactor.

The protein localises to the cytoplasm. The enzyme catalyses tRNA(Ala) + L-alanine + ATP = L-alanyl-tRNA(Ala) + AMP + diphosphate. In terms of biological role, catalyzes the attachment of alanine to tRNA(Ala) in a two-step reaction: alanine is first activated by ATP to form Ala-AMP and then transferred to the acceptor end of tRNA(Ala). Also edits incorrectly charged Ser-tRNA(Ala) and Gly-tRNA(Ala) via its editing domain. In Pseudomonas putida (strain W619), this protein is Alanine--tRNA ligase.